A 262-amino-acid polypeptide reads, in one-letter code: MGPISSSWSFNKFFSIVFVVFAISGEFVAGYYRPGPWRYAHATFYGDETGGETMGGACGYGNLFNSGYGLSTAALSTTLFNDGYGCGQCFQITCSKSPHCYSGKSTVVTATNLCPPNWYQDSNAGGWCNPPRTHFDMAKPAFMKLAYWRAGIIPVAYRRVPCQRSGGMRFQFQGNSYWLLIFVMNVGGAGDIKSMAVKGSRTNWISMSHNWGASYQAFSSLYGQSLSFRVTSYTTGETIYAWNVAPANWSGGKTYKSTANFR.

The N-terminal stretch at 1–30 (MGPISSSWSFNKFFSIVFVVFAISGEFVAG) is a signal peptide. The region spanning 55-167 (GGACGYGNLF…RRVPCQRSGG (113 aa)) is the Expansin-like EG45 domain. Intrachain disulfides connect cysteine 58–cysteine 86, cysteine 89–cysteine 162, and cysteine 94–cysteine 100. In terms of domain architecture, Expansin-like CBD spans 177–257 (YWLLIFVMNV…NWSGGKTYKS (81 aa)).

The protein belongs to the expansin family. Expansin A subfamily.

Its subcellular location is the secreted. It localises to the cell wall. It is found in the membrane. Causes loosening and extension of plant cell walls by disrupting non-covalent bonding between cellulose microfibrils and matrix glucans. No enzymatic activity has been found. This is Expansin-A7 (EXPA7) from Arabidopsis thaliana (Mouse-ear cress).